A 348-amino-acid chain; its full sequence is Centromere protein N (348 aa).

It belongs to the CENP-N/CHL4 family.

The protein localises to the nucleus. The protein resides in the chromosome. It is found in the centromere. Probable component of a centromeric complex involved in assembly of kinetochore proteins, mitotic progression and chromosome segregation. This is Centromere protein N (cenpn) from Xenopus tropicalis (Western clawed frog).